A 66-amino-acid polypeptide reads, in one-letter code: DNA gyrase inhibitor YacG (66 aa).

Residues Cys9, Cys12, Cys28, and Cys32 each coordinate Zn(2+). A disordered region spans residues 45 to 66; the sequence is HKIAGSEESEDELYSGDLEPRH.

It belongs to the DNA gyrase inhibitor YacG family. In terms of assembly, interacts with GyrB. It depends on Zn(2+) as a cofactor.

Inhibits all the catalytic activities of DNA gyrase by preventing its interaction with DNA. Acts by binding directly to the C-terminal domain of GyrB, which probably disrupts DNA binding by the gyrase. The protein is DNA gyrase inhibitor YacG of Pseudomonas putida (strain ATCC 47054 / DSM 6125 / CFBP 8728 / NCIMB 11950 / KT2440).